The chain runs to 306 residues: Beta-lactamase 1 (306 aa).

The first 27 residues, 1–27 (MILKNKRMLKIGICVGILGLSITSLEA), serve as a signal peptide directing secretion. Catalysis depends on Ser91, which acts as the Acyl-ester intermediate. The active-site Proton acceptor is the Glu187. 253–255 (KSG) provides a ligand contact to substrate.

The protein belongs to the class-A beta-lactamase family.

It catalyses the reaction a beta-lactam + H2O = a substituted beta-amino acid. This protein is a beta-lactamase with a substrate specificity for penicillins. This chain is Beta-lactamase 1 (blaY), found in Bacillus cereus.